We begin with the raw amino-acid sequence, 247 residues long: tRNA pseudouridine synthase A (247 aa).

The active-site Nucleophile is the aspartate 53. Tyrosine 111 lines the substrate pocket.

Belongs to the tRNA pseudouridine synthase TruA family. In terms of assembly, homodimer.

The enzyme catalyses uridine(38/39/40) in tRNA = pseudouridine(38/39/40) in tRNA. In terms of biological role, formation of pseudouridine at positions 38, 39 and 40 in the anticodon stem and loop of transfer RNAs. This is tRNA pseudouridine synthase A from Bacillus pumilus (strain SAFR-032).